The following is a 270-amino-acid chain: MAEAVGAVALIAAPARRRWLWSVLAAMLGLLTARISALEVHTPKEIFVVNGTQGKLTCTFDSPNTTGWLTTVSWSFQPDGTDSAVSFFHYSQGQVYIGDYPPFKDRVTWAGDLDKKDASINIENIQAVHNGTYICDVKNPPDIVVRPGHIRLHVVEIDNLLVFLVWVVVGTVTAVVLGLTLLISLVLVVLYRRKHSKRDYTGCSTSERLSPVKQAPRKCPSDTEGLVKSPPSAGSHQGPVIYAQLDHSGGHHSGKINKSESVVYADIRKD.

Positions 1–35 (MAEAVGAVALIAAPARRRWLWSVLAAMLGLLTARI) are cleaved as a signal peptide. Residues 36-151 (SALEVHTPKE…DIVVRPGHIR (116 aa)) form the Ig-like V-type domain. Residues 36-162 (SALEVHTPKE…HVVEIDNLLV (127 aa)) lie on the Extracellular side of the membrane. 2 N-linked (GlcNAc...) asparagine glycosylation sites follow: asparagine 50 and asparagine 130. Cysteines 58 and 135 form a disulfide. The chain crosses the membrane as a helical span at residues 163-183 (FLVWVVVGTVTAVVLGLTLLI). At 184-270 (SLVLVVLYRR…SVVYADIRKD (87 aa)) the chain is on the cytoplasmic side. Residues 201–257 (TGCSTSERLSPVKQAPRKCPSDTEGLVKSPPSAGSHQGPVIYAQLDHSGGHHSGKIN) are disordered. 4 positions are modified to phosphoserine: serine 204, serine 206, serine 210, and serine 221. The ITIM motif 1 motif lies at 240–245 (VIYAQL). Tyrosine 242 is subject to Phosphotyrosine. Serine 261 is modified (phosphoserine). The ITIM motif 2 signature appears at 262-267 (VVYADI). Residue tyrosine 264 is modified to Phosphotyrosine.

It belongs to the myelin P0 protein family. As to quaternary structure, interacts with phosphorylated PTPN11/SHP-2. Post-translationally, phosphorylated on tyrosine residues upon stimulation with pervanadate and concanavalin-A (ConA). Phosphorylation at Tyr-242 and Tyr-264 is required for interaction with PTPN11/SHP-2. Dephosphorylated by PTPN11/SHP-2 (in vitro).

The protein localises to the membrane. Functionally, cell surface receptor, which is involved in signal transduction processes. Recruits PTPN11/SHP-2 to the cell membrane and is a putative substrate of PTPN11/SHP-2. Is a major receptor for concanavalin-A (ConA) and is involved in cellular signaling induced by ConA, which probably includes Src family tyrosine-protein kinases. Isoform 2 seems to have a dominant negative role; it blocks tyrosine phosphorylation of MPZL1 induced by ConA. Isoform 1, but not isoform 2, may be involved in regulation of integrin-mediated cell motility. This Mus musculus (Mouse) protein is Myelin protein zero-like protein 1 (Mpzl1).